Reading from the N-terminus, the 388-residue chain is Chorismate synthase (388 aa).

2 residues coordinate NADP(+): Arg-39 and Arg-45. Residues Arg-130–Ser-132, Asn-251–Ala-252, Gly-296, Lys-311–Thr-315, and Arg-337 each bind FMN.

Belongs to the chorismate synthase family. Homotetramer. The cofactor is FMNH2.

It catalyses the reaction 5-O-(1-carboxyvinyl)-3-phosphoshikimate = chorismate + phosphate. Its pathway is metabolic intermediate biosynthesis; chorismate biosynthesis; chorismate from D-erythrose 4-phosphate and phosphoenolpyruvate: step 7/7. Functionally, catalyzes the anti-1,4-elimination of the C-3 phosphate and the C-6 proR hydrogen from 5-enolpyruvylshikimate-3-phosphate (EPSP) to yield chorismate, which is the branch point compound that serves as the starting substrate for the three terminal pathways of aromatic amino acid biosynthesis. This reaction introduces a second double bond into the aromatic ring system. The chain is Chorismate synthase from Streptococcus agalactiae serotype V (strain ATCC BAA-611 / 2603 V/R).